The primary structure comprises 156 residues: MKLQLIAVGTKMPDWIQTGFMDYLNRFPKDMPLELIEIPAGKRGKNADIKRILEKEGEQMLAAVGKGNRIVTLDIPGARWDTPKLAEQLDRWKLDGRNVSLLIGGPEGLAPACKAAAEQSWSLSPLTMPHPLVRVVVAESLYRAWSITTNHPYHRE.

S-adenosyl-L-methionine is bound by residues Leu-73, Gly-104, and 123 to 128 (LSPLTM).

It belongs to the RNA methyltransferase RlmH family. In terms of assembly, homodimer.

It is found in the cytoplasm. It catalyses the reaction pseudouridine(1915) in 23S rRNA + S-adenosyl-L-methionine = N(3)-methylpseudouridine(1915) in 23S rRNA + S-adenosyl-L-homocysteine + H(+). Its function is as follows. Specifically methylates the pseudouridine at position 1915 (m3Psi1915) in 23S rRNA. The protein is Ribosomal RNA large subunit methyltransferase H of Proteus mirabilis (strain HI4320).